The primary structure comprises 289 residues: 1D-myo-inositol 2-acetamido-2-deoxy-alpha-D-glucopyranoside deacetylase 1 (289 aa).

Residues His-4, Asp-7, and His-140 each coordinate Zn(2+).

It belongs to the MshB deacetylase family. Zn(2+) is required as a cofactor.

The enzyme catalyses 1D-myo-inositol 2-acetamido-2-deoxy-alpha-D-glucopyranoside + H2O = 1D-myo-inositol 2-amino-2-deoxy-alpha-D-glucopyranoside + acetate. Catalyzes the deacetylation of 1D-myo-inositol 2-acetamido-2-deoxy-alpha-D-glucopyranoside (GlcNAc-Ins) in the mycothiol biosynthesis pathway. In Frankia alni (strain DSM 45986 / CECT 9034 / ACN14a), this protein is 1D-myo-inositol 2-acetamido-2-deoxy-alpha-D-glucopyranoside deacetylase 1.